We begin with the raw amino-acid sequence, 1109 residues long: Myosin ID heavy chain (1109 aa).

The region spanning 7 to 687 (HGVDDMVMLS…TVFNLEELRE (681 aa)) is the Myosin motor domain. ATP is bound at residue 101–108 (GESGAGKT). The segment at 564–586 (IGALVKALSACTPHYIRCIKPNG) is actin-binding. Residues 725–919 (KERRRLSIER…VSTPSDGLPA (195 aa)) form the TH1 domain. The SH3 domain maps to 958–1017 (NVKPSAKALYDFDAESSMELSFKEGDILTVLDQSSGDWWDAELKGRRGKVPSNYLQLIKN). Residues 1017-1109 (NAAPPRAGGP…APRGGMAPRV (93 aa)) form a disordered region. The segment covering 1030–1043 (TGNRAPTTTTTSGG) has biased composition (low complexity).

It belongs to the TRAFAC class myosin-kinesin ATPase superfamily. Myosin family. In terms of assembly, myosin I heavy chain is single-headed. Dimer of a heavy and a light chain. Inability to self-assemble into filaments.

Its subcellular location is the cell projection. The protein resides in the pseudopodium. It is found in the cytoplasm. It localises to the cell cortex. Myosin is a protein that binds to actin and has ATPase activity that is activated by actin. Myosin id may have a role in chemotaxis and aggregation; it could serve to stabilize and even retract cortical structures, such as pseudopods and lamellopods. Involved in the process of phagocytosis. In Dictyostelium discoideum (Social amoeba), this protein is Myosin ID heavy chain (myoD).